The chain runs to 233 residues: MVKVGLVDDYRVDLEKLEAIVSRMQDVEIVFSTDSAKEAYRRVKNGDIDLLLADIEMPHMSGYELADLIKSHSLDVDVIFVTGHGGYAVHAFDLNVHDYIMKPYYADRLAASFDRYLKKKTETSLNGRILIKQKSEMHVLQKKDIIFAERTGRSTTIVTTAEEVQTYQTLNDIKGDLPEKDFLRSHRSFIINIHYIKHFSAYTKHSFTVSFEGTSKKAMITKQQLDYFQNYYF.

Positions 3–117 (KVGLVDDYRV…RLAASFDRYL (115 aa)) constitute a Response regulatory domain. Asp54 is modified (4-aspartylphosphate). The HTH LytTR-type domain maps to 129–233 (ILIKQKSEMH…QLDYFQNYYF (105 aa)).

In terms of processing, phosphorylated by NatK.

It localises to the cytoplasm. Its function is as follows. Member of the two-component regulatory system NatK/NatR that positively regulates the expression of the natAB operon. Acts by binding directly to the promoter of natAB. The protein is Transcriptional regulatory protein NatR of Bacillus subtilis (strain 168).